Consider the following 461-residue polypeptide: Argininosuccinate lyase (461 aa).

It belongs to the lyase 1 family. Argininosuccinate lyase subfamily.

It is found in the cytoplasm. It carries out the reaction 2-(N(omega)-L-arginino)succinate = fumarate + L-arginine. It participates in amino-acid biosynthesis; L-arginine biosynthesis; L-arginine from L-ornithine and carbamoyl phosphate: step 3/3. The protein is Argininosuccinate lyase of Syntrophotalea carbinolica (strain DSM 2380 / NBRC 103641 / GraBd1) (Pelobacter carbinolicus).